The following is an 86-amino-acid chain: MGRKDAATIKLPVDQYRKQIGKQDYKKTKPILRATKLKAEAKKTAIGIKEVGLVLAAILALLLAFYAFFYLRLTTDVDPDLDQDED.

The helical transmembrane segment at 51 to 71 (VGLVLAAILALLLAFYAFFYL) threads the bilayer.

The protein belongs to the TRIQK family.

It is found in the endoplasmic reticulum membrane. May play a role in cell growth and maintenance of cell morphology. This is Triple QxxK/R motif-containing protein (TRIQK) from Homo sapiens (Human).